The sequence spans 275 residues: Phosphonoacetaldehyde hydrolase (275 aa).

Aspartate 15 (nucleophile) is an active-site residue. Positions 15 and 17 each coordinate Mg(2+). Lysine 56 acts as the Schiff-base intermediate with substrate in catalysis. Aspartate 189 lines the Mg(2+) pocket.

This sequence belongs to the HAD-like hydrolase superfamily. PhnX family. Homodimer. The cofactor is Mg(2+).

The catalysed reaction is phosphonoacetaldehyde + H2O = acetaldehyde + phosphate + H(+). In terms of biological role, involved in phosphonate degradation. This is Phosphonoacetaldehyde hydrolase from Pseudomonas fluorescens (strain Pf0-1).